A 343-amino-acid polypeptide reads, in one-letter code: Melanoma-associated antigen B18 (343 aa).

The span at 1 to 17 shows a compositional bias: basic residues; that stretch reads MPRGQKSKLRAREKRHQ. The disordered stretch occupies residues 1–102; sequence MPRGQKSKLR…LGSSREAEGW (102 aa). Residues 67–87 are compositionally biased toward polar residues; the sequence is APSTTNAIAPVSCSSNEGASS. Over residues 88 to 102 the composition is skewed to basic and acidic residues; sequence QDEKSLGSSREAEGW. The segment at 100-343 is interaction with LNX1; sequence EGWKEDPLNK…TTSSSFSHAK (244 aa). The MAGE domain occupies 107 to 306; that stretch reads LNKKVVSLVH…SAFPSCYEEA (200 aa). Positions 313–343 are disordered; that stretch reads RTQARAAARAHTAAMANARSRTTSSSFSHAK. A compositionally biased stretch (low complexity) spans 316–333; the sequence is ARAAARAHTAAMANARSR. Residues 334–343 show a composition bias toward polar residues; the sequence is TTSSSFSHAK.

As to quaternary structure, interacts with LNX1.

It localises to the cytoplasm. Functionally, may enhance ubiquitin ligase activity of RING-type zinc finger-containing E3 ubiquitin-protein ligases. Proposed to act through recruitment and/or stabilization of the Ubl-conjugating enzyme (E2) at the E3:substrate complex. This is Melanoma-associated antigen B18 (MAGEB18) from Homo sapiens (Human).